A 382-amino-acid polypeptide reads, in one-letter code: Chaperone protein DnaJ (382 aa).

Residues 6–70 (DYYEILGLPK…EKRAQYDRFG (65 aa)) form the J domain. The CR-type zinc finger occupies 131 to 213 (GVRKDIDIPR…CGGAGRVRNK (83 aa)). 8 residues coordinate Zn(2+): Cys144, Cys147, Cys161, Cys164, Cys187, Cys190, Cys201, and Cys204. 4 CXXCXGXG motif repeats span residues 144–151 (CSTCSGTG), 161–168 (CPTCGGTG), 187–194 (CSTCHGRG), and 201–208 (CPVCGGAG). The interval 146-168 (TCSGTGAKPGTSPKRCPTCGGTG) is disordered. The disordered stretch occupies residues 348–382 (FENLSKGKKPQEEEKSKAEKHKKGIFEKVKDAFES). Basic and acidic residues predominate over residues 371-382 (GIFEKVKDAFES).

This sequence belongs to the DnaJ family. Homodimer. It depends on Zn(2+) as a cofactor.

The protein localises to the cytoplasm. Functionally, participates actively in the response to hyperosmotic and heat shock by preventing the aggregation of stress-denatured proteins and by disaggregating proteins, also in an autonomous, DnaK-independent fashion. Unfolded proteins bind initially to DnaJ; upon interaction with the DnaJ-bound protein, DnaK hydrolyzes its bound ATP, resulting in the formation of a stable complex. GrpE releases ADP from DnaK; ATP binding to DnaK triggers the release of the substrate protein, thus completing the reaction cycle. Several rounds of ATP-dependent interactions between DnaJ, DnaK and GrpE are required for fully efficient folding. Also involved, together with DnaK and GrpE, in the DNA replication of plasmids through activation of initiation proteins. The sequence is that of Chaperone protein DnaJ from Methanosarcina acetivorans (strain ATCC 35395 / DSM 2834 / JCM 12185 / C2A).